We begin with the raw amino-acid sequence, 375 residues long: MEVLSEQQLFFMRKAVALGEKGRIFAPPNPWVGCVIVKNGCVIGEGWHQGIGSPHAEVCAVQDQKCSLEGAEVFVTLEPCCHFGRTPPCVDLLIKSKVAAVYVGLLDPDPRVCKKGVARLQAAGIPVYVGVGSQEAKTSLQPYLYQRERGLPWVVMKTAASLDGQTADRGGSSQWISGELARADVGKLRAESQAIIVGARTVCLDNPRLSARFPHGDLYERQPLRVVVDSRGTVPLESRVFDLSSGSTLFATTQQCPKEYIQKLKDLGVEVWESSSHQVDLKGLLRYLAERGCLQVLVEGGAQLHSAFWQQKLVNAGVIYWGPKFLGDQGQPMLRDLQLSLVTAEHVRITETSLVRDSVKTCFECLEQESVDKKG.

Residues 1 to 150 form a deaminase region; sequence MEVLSEQQLF…QPYLYQRERG (150 aa). One can recognise a CMP/dCMP-type deaminase domain in the interval 6–127; that stretch reads EQQLFFMRKA…ARLQAAGIPV (122 aa). H55 is a binding site for Zn(2+). Residue E57 is the Proton donor of the active site. Residues C80 and C89 each contribute to the Zn(2+) site. The tract at residues 151-375 is reductase; the sequence is LPWVVMKTAA…LEQESVDKKG (225 aa). A159 contacts NADP(+). Position 173 (S173) interacts with substrate. NADP(+) is bound at residue W175. R189 serves as a coordination point for substrate. The NADP(+) site is built by T201 and D205. L209 and R212 together coordinate substrate. NADP(+) is bound at residue S230. Position 299 (E299) interacts with substrate. NADP(+) is bound at residue 301 to 307; that stretch reads GAQLHSA.

In the N-terminal section; belongs to the cytidine and deoxycytidylate deaminase family. It in the C-terminal section; belongs to the HTP reductase family. It depends on Zn(2+) as a cofactor.

The enzyme catalyses 2,5-diamino-6-hydroxy-4-(5-phosphoribosylamino)-pyrimidine + H2O + H(+) = 5-amino-6-(5-phospho-D-ribosylamino)uracil + NH4(+). It carries out the reaction 5-amino-6-(5-phospho-D-ribitylamino)uracil + NADP(+) = 5-amino-6-(5-phospho-D-ribosylamino)uracil + NADPH + H(+). Its pathway is cofactor biosynthesis; riboflavin biosynthesis; 5-amino-6-(D-ribitylamino)uracil from GTP: step 2/4. The protein operates within cofactor biosynthesis; riboflavin biosynthesis; 5-amino-6-(D-ribitylamino)uracil from GTP: step 3/4. Converts 2,5-diamino-6-(ribosylamino)-4(3h)-pyrimidinone 5'-phosphate into 5-amino-6-(ribosylamino)-2,4(1h,3h)-pyrimidinedione 5'-phosphate. This Chlamydia trachomatis serovar D (strain ATCC VR-885 / DSM 19411 / UW-3/Cx) protein is Riboflavin biosynthesis protein RibD (ribD).